The primary structure comprises 98 residues: Cystatin-B (98 aa).

An N-acetylmethionine modification is found at M1. The short motif at 46–50 (QIVAG) is the Secondary area of contact element.

This sequence belongs to the cystatin family. As to expression, widely expressed. Highest expression in heart, liver and kidney. Lower levels in brain, lung and skeletal muscle. Lowest levels in spleen and testis.

The protein resides in the cytoplasm. Functionally, this is an intracellular thiol proteinase inhibitor. In Mus musculus (Mouse), this protein is Cystatin-B (Cstb).